The primary structure comprises 328 residues: MAFRLAVDCLGFENHPREAIDAVLEYWSYHQELEFILVGDEKTFDGLDYLPKNITKQLASSCIDMTDTPLTARRKVNNSMQKAINLVRDGAADVVISAGSSAVYASLTYDGFGKIHKDVKSAFMSYVPTANNDWFYFLDVGANKNFTGKELYFLGLMADIFVKKTTNKISPRIALLNIGTEIHKGFDYHQEGYQLLNEDKHLNFTGFIEPRFLLDGVCDILVADGYSGNLVLKSMEGTFKTIARLLKQGYKRNPLAGLFSLGILKRIAKRFDYKNNAGAVVIGLNKLALKTHGSADKQQFLSTIRLAHTSLKSDLINAIKSSLDNYEK.

Belongs to the PlsX family. In terms of assembly, homodimer. Probably interacts with PlsY.

It is found in the cytoplasm. The catalysed reaction is a fatty acyl-[ACP] + phosphate = an acyl phosphate + holo-[ACP]. It functions in the pathway lipid metabolism; phospholipid metabolism. Functionally, catalyzes the reversible formation of acyl-phosphate (acyl-PO(4)) from acyl-[acyl-carrier-protein] (acyl-ACP). This enzyme utilizes acyl-ACP as fatty acyl donor, but not acyl-CoA. The protein is Phosphate acyltransferase of Mycoplasma pneumoniae (strain ATCC 29342 / M129 / Subtype 1) (Mycoplasmoides pneumoniae).